Here is a 202-residue protein sequence, read N- to C-terminus: Snake venom metalloproteinase leucurolysin-A (202 aa).

At Q1 the chain carries Pyrrolidone carboxylic acid. Residues 6-202 (RYIELVVVAD…HNPQCILNKP (197 aa)) form the Peptidase M12B domain. Ca(2+) is bound by residues E9 and D93. Intrachain disulfides connect C117–C197, C157–C181, and C159–C164. Residue H142 participates in Zn(2+) binding. The active site involves E143. H146 and H152 together coordinate Zn(2+). Ca(2+) contacts are provided by C197 and N200.

Belongs to the venom metalloproteinase (M12B) family. P-I subfamily. In terms of assembly, monomer. The cofactor is Zn(2+). Expressed by the venom gland.

Its subcellular location is the secreted. With respect to regulation, inhibited by EDTA and 2-mercaptoethanol. Inhibited by 1 mM zinc ion and to a lesser extent by 1 mM calcium ion. Functionally, non-hemorrhagic metalloproteinase that hydrolyzes the alpha chains of fibrinogen, as well as fibrin, fibronectin and casein. Beta and gamma chains are also hydrolyzed, but more slowly. Thrombolytic activity is also observed. Induces detachment of endothelial cells followed by death, and inhibits endothelial cell adhesion to fibronectin. Induces edema in mouse paw. Inhibits ADP-induced platelet aggregation on human platelet-rich plasma with an IC(50) of 2.8 uM. This chain is Snake venom metalloproteinase leucurolysin-A, found in Bothrops leucurus (Whitetail lancehead).